Reading from the N-terminus, the 424-residue chain is D-inositol 3-phosphate glycosyltransferase (424 aa).

Position 16 (histidine 16) interacts with 1D-myo-inositol 3-phosphate. Residues 22 to 23 (QP) and glycine 30 contribute to the UDP-N-acetyl-alpha-D-glucosamine site. 1D-myo-inositol 3-phosphate is bound by residues 27 to 32 (DAGGMN), lysine 85, tyrosine 118, threonine 142, and arginine 162. Arginine 240 and lysine 245 together coordinate UDP-N-acetyl-alpha-D-glucosamine. Mg(2+) is bound by residues methionine 313, arginine 314, and alanine 316. Glutamate 326 and glutamate 334 together coordinate UDP-N-acetyl-alpha-D-glucosamine. Threonine 340 contributes to the Mg(2+) binding site.

It belongs to the glycosyltransferase group 1 family. MshA subfamily. In terms of assembly, homodimer.

The catalysed reaction is 1D-myo-inositol 3-phosphate + UDP-N-acetyl-alpha-D-glucosamine = 1D-myo-inositol 2-acetamido-2-deoxy-alpha-D-glucopyranoside 3-phosphate + UDP + H(+). Catalyzes the transfer of a N-acetyl-glucosamine moiety to 1D-myo-inositol 3-phosphate to produce 1D-myo-inositol 2-acetamido-2-deoxy-glucopyranoside 3-phosphate in the mycothiol biosynthesis pathway. The sequence is that of D-inositol 3-phosphate glycosyltransferase from Jonesia denitrificans (strain ATCC 14870 / DSM 20603 / BCRC 15368 / CIP 55.134 / JCM 11481 / NBRC 15587 / NCTC 10816 / Prevot 55134) (Listeria denitrificans).